Reading from the N-terminus, the 305-residue chain is tRNA dimethylallyltransferase (305 aa).

Residue 11–18 participates in ATP binding; the sequence is GPTAVGKT. 13–18 lines the substrate pocket; the sequence is TAVGKT. The tract at residues 36–39 is interaction with substrate tRNA; sequence DSMQ.

This sequence belongs to the IPP transferase family. Monomer. It depends on Mg(2+) as a cofactor.

The enzyme catalyses adenosine(37) in tRNA + dimethylallyl diphosphate = N(6)-dimethylallyladenosine(37) in tRNA + diphosphate. Catalyzes the transfer of a dimethylallyl group onto the adenine at position 37 in tRNAs that read codons beginning with uridine, leading to the formation of N6-(dimethylallyl)adenosine (i(6)A). In Listeria monocytogenes serotype 4a (strain HCC23), this protein is tRNA dimethylallyltransferase.